The chain runs to 679 residues: UvrABC system protein B (679 aa).

Residues 25–412 enclose the Helicase ATP-binding domain; it reads EGVNQGQRYQ…DGHLAEQVIR (388 aa). 38–45 is a binding site for ATP; sequence GATGTGKT. The Beta-hairpin motif lies at 91–114; the sequence is YYDYYQPEAYVPVSDTYIAKTSSI. Positions 429 to 591 constitute a Helicase C-terminal domain; that stretch reads QVDDLLAEIR…IVPRPAGKRA (163 aa). In terms of domain architecture, UVR spans 639–674; sequence PELIDQLETKMKEAAKNLNFEEAASLRDRIKKFRQK.

This sequence belongs to the UvrB family. Forms a heterotetramer with UvrA during the search for lesions. Interacts with UvrC in an incision complex.

The protein resides in the cytoplasm. Its function is as follows. The UvrABC repair system catalyzes the recognition and processing of DNA lesions. A damage recognition complex composed of 2 UvrA and 2 UvrB subunits scans DNA for abnormalities. Upon binding of the UvrA(2)B(2) complex to a putative damaged site, the DNA wraps around one UvrB monomer. DNA wrap is dependent on ATP binding by UvrB and probably causes local melting of the DNA helix, facilitating insertion of UvrB beta-hairpin between the DNA strands. Then UvrB probes one DNA strand for the presence of a lesion. If a lesion is found the UvrA subunits dissociate and the UvrB-DNA preincision complex is formed. This complex is subsequently bound by UvrC and the second UvrB is released. If no lesion is found, the DNA wraps around the other UvrB subunit that will check the other stand for damage. This chain is UvrABC system protein B, found in Prochlorococcus marinus (strain MIT 9313).